The following is a 202-amino-acid chain: MTLIALILPAYLLGSISFGVLASRFFQLPDPRTYGSGNPGATNVLRSGKKSAAIFTLLGDGGKGWLAVALAEYSAPLLELGNEAVAAAALGVFLGHLFPVFLHFKGGKGVATALGILLGFNPWMGLLAATIWLAVALMWRFSSLAAIVAASLAPFYALFFLGFEARTLVVFIMSLLLIWRHKSNIAGLIAGSESRIGKRSTS.

The next 4 helical transmembrane spans lie at M1–L21, A84–F104, I116–A136, and S143–F163.

Belongs to the PlsY family. In terms of assembly, probably interacts with PlsX.

It localises to the cell inner membrane. The enzyme catalyses an acyl phosphate + sn-glycerol 3-phosphate = a 1-acyl-sn-glycero-3-phosphate + phosphate. The protein operates within lipid metabolism; phospholipid metabolism. In terms of biological role, catalyzes the transfer of an acyl group from acyl-phosphate (acyl-PO(4)) to glycerol-3-phosphate (G3P) to form lysophosphatidic acid (LPA). This enzyme utilizes acyl-phosphate as fatty acyl donor, but not acyl-CoA or acyl-ACP. This Nitrosospira multiformis (strain ATCC 25196 / NCIMB 11849 / C 71) protein is Glycerol-3-phosphate acyltransferase.